The chain runs to 686 residues: ATP-dependent zinc metalloprotease FtsH 1 (686 aa).

The Cytoplasmic segment spans residues 1–33; sequence MCFCIVSSPEAMHSNADSPSSGPGLQPVWTTLR. The chain crosses the membrane as a helical span at residues 34–54; the sequence is SPYVFWIGGAILLALLVHLGI. Residues 55–164 lie on the Periplasmic side of the membrane; it reads KWQQASAPVR…TFAATQESDW (110 aa). A helical membrane pass occupies residues 165 to 185; it reads VGTLLLWGLPLGLIVGIWLFF. The Cytoplasmic portion of the chain corresponds to 186–686; sequence MRRMATGGRE…AEGASPSSQG (501 aa). 257–264 contacts ATP; the sequence is GPPGTGKT. Histidine 479 is a binding site for Zn(2+). Residue glutamate 480 is part of the active site. Residues histidine 483 and aspartate 555 each contribute to the Zn(2+) site. The segment at 661–686 is disordered; that stretch reads YAWLKEGDGTSRNSASAEGASPSSQG. Residues 670–686 are compositionally biased toward polar residues; that stretch reads TSRNSASAEGASPSSQG.

The protein in the central section; belongs to the AAA ATPase family. This sequence in the C-terminal section; belongs to the peptidase M41 family. Homohexamer. The cofactor is Zn(2+).

It is found in the cell inner membrane. Its function is as follows. Acts as a processive, ATP-dependent zinc metallopeptidase for both cytoplasmic and membrane proteins. Plays a role in the quality control of integral membrane proteins. This is ATP-dependent zinc metalloprotease FtsH 1 from Salinibacter ruber (strain M8).